A 113-amino-acid polypeptide reads, in one-letter code: Protein translation factor SUI1 homolog (113 aa).

The interval 1–24 (MSELDSQVPTAFDPFADANAEDSG) is disordered. N-acetylserine is present on Ser2.

This sequence belongs to the SUI1 family.

Probably involved in translation. This is Protein translation factor SUI1 homolog from Brassica oleracea (Wild cabbage).